The following is a 182-amino-acid chain: Small ribosomal subunit protein uS4c (182 aa).

One can recognise an S4 RNA-binding domain in the interval 82–143 (MRLDNILFRL…KQRSKALIQN (62 aa)).

It belongs to the universal ribosomal protein uS4 family. In terms of assembly, part of the 30S ribosomal subunit. Contacts protein S5. The interaction surface between S4 and S5 is involved in control of translational fidelity.

The protein localises to the plastid. Its subcellular location is the chloroplast. Functionally, one of the primary rRNA binding proteins, it binds directly to 16S rRNA where it nucleates assembly of the body of the 30S subunit. Its function is as follows. With S5 and S12 plays an important role in translational accuracy. The protein is Small ribosomal subunit protein uS4c (rps4) of Libertia formosa (Snowy mermaid).